Consider the following 167-residue polypeptide: Small ribosomal subunit protein mS25 (167 aa).

Belongs to the mitochondrion-specific ribosomal protein mS25 family. In terms of assembly, component of the mitochondrial ribosome small subunit (28S) which comprises a 12S rRNA and about 30 distinct proteins.

It is found in the mitochondrion. The protein is Small ribosomal subunit protein mS25 (mRpS25) of Drosophila melanogaster (Fruit fly).